The chain runs to 105 residues: ATP-dependent Clp protease adapter protein ClpS (105 aa).

Belongs to the ClpS family. In terms of assembly, binds to the N-terminal domain of the chaperone ClpA.

Involved in the modulation of the specificity of the ClpAP-mediated ATP-dependent protein degradation. The polypeptide is ATP-dependent Clp protease adapter protein ClpS (Aeromonas salmonicida (strain A449)).